Here is a 178-residue protein sequence, read N- to C-terminus: MGTQVVTARPGSASCILGIDPGLNTTGYAVISREGPRLCLREAGVIKSRRSDTLPERLREIHVGLSEVFAVHAVDLMALEQLFSHYDRPRTAILMGHARGVICLAAASAGVPVEHYEPTRVKKVMTGNGRAPKSQIQLAVKMQLNLQSVPEPADVADAMAISLCGHYLANNPIDQALA.

Residues Asp-20, Glu-80, and Asp-154 contribute to the active site. Residues Asp-20, Glu-80, and Asp-154 each coordinate Mg(2+).

It belongs to the RuvC family. As to quaternary structure, homodimer which binds Holliday junction (HJ) DNA. The HJ becomes 2-fold symmetrical on binding to RuvC with unstacked arms; it has a different conformation from HJ DNA in complex with RuvA. In the full resolvosome a probable DNA-RuvA(4)-RuvB(12)-RuvC(2) complex forms which resolves the HJ. Mg(2+) is required as a cofactor.

Its subcellular location is the cytoplasm. The enzyme catalyses Endonucleolytic cleavage at a junction such as a reciprocal single-stranded crossover between two homologous DNA duplexes (Holliday junction).. In terms of biological role, the RuvA-RuvB-RuvC complex processes Holliday junction (HJ) DNA during genetic recombination and DNA repair. Endonuclease that resolves HJ intermediates. Cleaves cruciform DNA by making single-stranded nicks across the HJ at symmetrical positions within the homologous arms, yielding a 5'-phosphate and a 3'-hydroxyl group; requires a central core of homology in the junction. The consensus cleavage sequence is 5'-(A/T)TT(C/G)-3'. Cleavage occurs on the 3'-side of the TT dinucleotide at the point of strand exchange. HJ branch migration catalyzed by RuvA-RuvB allows RuvC to scan DNA until it finds its consensus sequence, where it cleaves and resolves the cruciform DNA. The chain is Crossover junction endodeoxyribonuclease RuvC from Rhodopirellula baltica (strain DSM 10527 / NCIMB 13988 / SH1).